Reading from the N-terminus, the 593-residue chain is Aspartate--tRNA ligase (593 aa).

Residue Glu-180 coordinates L-aspartate. Residues 204–207 are aspartate; the sequence is QIFK. Residue Arg-226 coordinates L-aspartate. ATP is bound by residues 226-228 and Gln-235; that span reads RDE. His-453 contacts L-aspartate. Glu-487 provides a ligand contact to ATP. Arg-494 is an L-aspartate binding site. 539-542 is an ATP binding site; that stretch reads GLDR.

This sequence belongs to the class-II aminoacyl-tRNA synthetase family. Type 1 subfamily. Homodimer.

The protein resides in the cytoplasm. It catalyses the reaction tRNA(Asp) + L-aspartate + ATP = L-aspartyl-tRNA(Asp) + AMP + diphosphate. Its function is as follows. Catalyzes the attachment of L-aspartate to tRNA(Asp) in a two-step reaction: L-aspartate is first activated by ATP to form Asp-AMP and then transferred to the acceptor end of tRNA(Asp). In Clostridium botulinum (strain Kyoto / Type A2), this protein is Aspartate--tRNA ligase.